Here is a 297-residue protein sequence, read N- to C-terminus: Protein phosphatase PTC7 homolog (297 aa).

Residues M1–Y27 constitute a mitochondrion transit peptide. Positions S28 to V292 constitute a PPM-type phosphatase domain. Mn(2+)-binding residues include D71, G72, and D216.

The protein belongs to the PP2C family. Mg(2+) serves as cofactor. Mn(2+) is required as a cofactor.

The protein resides in the mitochondrion matrix. The catalysed reaction is O-phospho-L-seryl-[protein] + H2O = L-seryl-[protein] + phosphate. The enzyme catalyses O-phospho-L-threonyl-[protein] + H2O = L-threonyl-[protein] + phosphate. Protein phosphatase which positively regulates biosynthesis of the ubiquinone, coenzyme Q. Dephosphorylates the ubiquinone biosynthesis protein coq7 which is likely to lead to its activation. The sequence is that of Protein phosphatase PTC7 homolog (pptc7) from Danio rerio (Zebrafish).